The chain runs to 419 residues: 3-isopropylmalate dehydratase large subunit (419 aa).

[4Fe-4S] cluster is bound by residues C300, C360, and C363.

Belongs to the aconitase/IPM isomerase family. LeuC type 2 subfamily. In terms of assembly, heterodimer of LeuC and LeuD. It depends on [4Fe-4S] cluster as a cofactor.

The enzyme catalyses (2R,3S)-3-isopropylmalate = (2S)-2-isopropylmalate. The protein operates within amino-acid biosynthesis; L-leucine biosynthesis; L-leucine from 3-methyl-2-oxobutanoate: step 2/4. Functionally, catalyzes the isomerization between 2-isopropylmalate and 3-isopropylmalate, via the formation of 2-isopropylmaleate. This Clostridium botulinum (strain Eklund 17B / Type B) protein is 3-isopropylmalate dehydratase large subunit.